The following is a 180-amino-acid chain: Ribosome maturation factor RimM (180 aa).

The PRC barrel domain maps to 103-176 (GDIWWDRDLV…RIVVDPPPGL (74 aa)).

The protein belongs to the RimM family. Binds ribosomal protein uS19.

The protein localises to the cytoplasm. An accessory protein needed during the final step in the assembly of 30S ribosomal subunit, possibly for assembly of the head region. Essential for efficient processing of 16S rRNA. May be needed both before and after RbfA during the maturation of 16S rRNA. It has affinity for free ribosomal 30S subunits but not for 70S ribosomes. This chain is Ribosome maturation factor RimM, found in Frankia alni (strain DSM 45986 / CECT 9034 / ACN14a).